The chain runs to 492 residues: Phosphatidylglycerol--prolipoprotein diacylglyceryl transferase (492 aa).

A run of 9 helical transmembrane segments spans residues 40-60 (IFGI…YVGW), 72-92 (AIRQ…VVVP), 106-126 (VAVR…VGLA), 133-153 (AGLG…GGLL), 184-204 (QGGL…LIAL), 214-234 (IGDV…LGCL), 361-381 (VWGT…VLLI), 409-429 (GVLM…LEWI), and 441-461 (LSIS…TLFI). An a 1,2-diacyl-sn-glycero-3-phospho-(1'-sn-glycerol)-binding site is contributed by arginine 230.

The protein belongs to the Lgt family.

It localises to the cell inner membrane. The catalysed reaction is L-cysteinyl-[prolipoprotein] + a 1,2-diacyl-sn-glycero-3-phospho-(1'-sn-glycerol) = an S-1,2-diacyl-sn-glyceryl-L-cysteinyl-[prolipoprotein] + sn-glycerol 1-phosphate + H(+). It functions in the pathway protein modification; lipoprotein biosynthesis (diacylglyceryl transfer). In terms of biological role, catalyzes the transfer of the diacylglyceryl group from phosphatidylglycerol to the sulfhydryl group of the N-terminal cysteine of a prolipoprotein, the first step in the formation of mature lipoproteins. In Rhodopirellula baltica (strain DSM 10527 / NCIMB 13988 / SH1), this protein is Phosphatidylglycerol--prolipoprotein diacylglyceryl transferase.